A 304-amino-acid chain; its full sequence is Energy-coupling factor transporter ATP-binding protein EcfA2 (304 aa).

One can recognise an ABC transporter domain in the interval 11 to 260 (LKADEILAVS…QTFLEKTTIV (250 aa)). 54–61 (GDSGSGKS) lines the ATP pocket.

Belongs to the ABC transporter superfamily. Energy-coupling factor EcfA family. As to quaternary structure, forms a stable energy-coupling factor (ECF) transporter complex composed of 2 membrane-embedded substrate-binding proteins (S component), 2 ATP-binding proteins (A component) and 2 transmembrane proteins (T component).

It is found in the cell membrane. In terms of biological role, ATP-binding (A) component of a common energy-coupling factor (ECF) ABC-transporter complex. Unlike classic ABC transporters this ECF transporter provides the energy necessary to transport a number of different substrates. The polypeptide is Energy-coupling factor transporter ATP-binding protein EcfA2 (Mycoplasma genitalium (strain ATCC 33530 / DSM 19775 / NCTC 10195 / G37) (Mycoplasmoides genitalium)).